A 444-amino-acid chain; its full sequence is uncharacterized protein (444 aa).

14 consecutive transmembrane segments (helical) span residues L9–V29, I42–I62, L82–F102, A104–S126, F136–I156, I164–P184, A193–L213, E217–F237, L263–M283, G295–L315, I324–S344, S347–T367, G387–I407, and H411–I431.

Belongs to the major facilitator superfamily. TCR/Tet family.

Its subcellular location is the cell membrane. This is an uncharacterized protein from Bacillus subtilis (strain 168).